The chain runs to 589 residues: Serine/threonine-protein kinase STE7 homolog (589 aa).

The span at 1–18 shows a compositional bias: basic and acidic residues; that stretch reads MTRTTRIDTQEATKHKDL. Disordered regions lie at residues 1–162 and 185–233; these read MTRT…DPDN and RQHY…ASSQ. Low complexity predominate over residues 24–33; it reads PLSLSSNPNP. Residues 57–69 show a composition bias toward polar residues; it reads VKSTSGSLRSSDM. Over residues 92–121 the composition is skewed to low complexity; sequence PTASSSATSTPTSNITGSSSASSIQFAQKS. Composition is skewed to polar residues over residues 127 to 136 and 144 to 162; these read IVSQTLSRPS and SGYS…DPDN. A compositionally biased stretch (basic residues) spans 185-203; the sequence is RQHYQNSHHHLPTTNRKRQ. Residues 206–220 are compositionally biased toward low complexity; that stretch reads ISSISPTKSSAASSS. Positions 221 to 233 are enriched in polar residues; that stretch reads LEPQIQSLPASSQ. Residues 249–565 enclose the Protein kinase domain; it reads LLTLKQLGSG…QLLEDKEHFF (317 aa). ATP is bound by residues 255–263 and lysine 278; that span reads LGSGNSGSV. The Proton acceptor role is filled by aspartate 374. The residue at position 402 (serine 402) is a Phosphoserine. Phosphothreonine is present on threonine 408. Residues 473-499 are disordered; it reads IAAERNGQNSPSRSRKNKQKGNGYNSY.

The protein belongs to the protein kinase superfamily. STE Ser/Thr protein kinase family. MAP kinase kinase subfamily.

It catalyses the reaction L-seryl-[protein] + ATP = O-phospho-L-seryl-[protein] + ADP + H(+). The catalysed reaction is L-threonyl-[protein] + ATP = O-phospho-L-threonyl-[protein] + ADP + H(+). It carries out the reaction L-tyrosyl-[protein] + ATP = O-phospho-L-tyrosyl-[protein] + ADP + H(+). This is Serine/threonine-protein kinase STE7 homolog (HST7) from Candida albicans (strain SC5314 / ATCC MYA-2876) (Yeast).